A 336-amino-acid polypeptide reads, in one-letter code: Holliday junction branch migration complex subunit RuvB (336 aa).

Residues 2-186 (QDQEEERMIT…FGVICKLELY (185 aa)) form a large ATPase domain (RuvB-L) region. ATP is bound by residues L25, R26, G67, K70, T71, T72, 133–135 (EDF), R176, Y186, and R223. A Mg(2+)-binding site is contributed by T71. Residues 187-257 (NNKQLTAIVK…VAEEALILLE (71 aa)) form a small ATPAse domain (RuvB-S) region. The tract at residues 260-336 (SLGLDNTDKK…YEHFNIPSAE (77 aa)) is head domain (RuvB-H). Positions 296, 315, and 320 each coordinate DNA.

This sequence belongs to the RuvB family. Homohexamer. Forms an RuvA(8)-RuvB(12)-Holliday junction (HJ) complex. HJ DNA is sandwiched between 2 RuvA tetramers; dsDNA enters through RuvA and exits via RuvB. An RuvB hexamer assembles on each DNA strand where it exits the tetramer. Each RuvB hexamer is contacted by two RuvA subunits (via domain III) on 2 adjacent RuvB subunits; this complex drives branch migration. In the full resolvosome a probable DNA-RuvA(4)-RuvB(12)-RuvC(2) complex forms which resolves the HJ.

It localises to the cytoplasm. It catalyses the reaction ATP + H2O = ADP + phosphate + H(+). In terms of biological role, the RuvA-RuvB-RuvC complex processes Holliday junction (HJ) DNA during genetic recombination and DNA repair, while the RuvA-RuvB complex plays an important role in the rescue of blocked DNA replication forks via replication fork reversal (RFR). RuvA specifically binds to HJ cruciform DNA, conferring on it an open structure. The RuvB hexamer acts as an ATP-dependent pump, pulling dsDNA into and through the RuvAB complex. RuvB forms 2 homohexamers on either side of HJ DNA bound by 1 or 2 RuvA tetramers; 4 subunits per hexamer contact DNA at a time. Coordinated motions by a converter formed by DNA-disengaged RuvB subunits stimulates ATP hydrolysis and nucleotide exchange. Immobilization of the converter enables RuvB to convert the ATP-contained energy into a lever motion, pulling 2 nucleotides of DNA out of the RuvA tetramer per ATP hydrolyzed, thus driving DNA branch migration. The RuvB motors rotate together with the DNA substrate, which together with the progressing nucleotide cycle form the mechanistic basis for DNA recombination by continuous HJ branch migration. Branch migration allows RuvC to scan DNA until it finds its consensus sequence, where it cleaves and resolves cruciform DNA. The sequence is that of Holliday junction branch migration complex subunit RuvB from Alkaliphilus metalliredigens (strain QYMF).